The primary structure comprises 481 residues: Anti-sigma-I factor RsgI5 (481 aa).

Topologically, residues 1-50 (MKHKGIVLKLTKSKAIISTNDFQCYYIKRSPTIYVGKEVEFTNKDIVTKK) are cytoplasmic. The RsgI N-terminal anti-sigma domain maps to 3–50 (HKGIVLKLTKSKAIISTNDFQCYYIKRSPTIYVGKEVEFTNKDIVTKK). Residues 51–71 (SVLIKPALSVACFILLIACVL) form a helical membrane-spanning segment. At 72 to 481 (SLSKIINNIS…DATFIGIKVD (410 aa)) the chain is on the extracellular side. The disordered stretch occupies residues 255-339 (ASEERNPEES…TPTPTPTPAD (85 aa)). Positions 256 to 265 (SEERNPEESP) are enriched in basic and acidic residues. Composition is skewed to low complexity over residues 266–283 (KMTPTPTPTHTATHTPTD) and 291–315 (NTPTSTPAAKPSPKTASNSASTSTP). The segment covering 316 to 336 (APKPTSTPTPTLMPTPTPTPT) has biased composition (pro residues).

In terms of assembly, interacts (via RsgI N-terminal anti-sigma domain) with SigI5.

The protein resides in the cell membrane. Its function is as follows. Anti-sigma factor for SigI5. Negatively regulates SigI5 activity through direct interaction. Binding of the polysaccharide substrate to the extracellular C-terminal sensing domain of RsgI5 may induce a conformational change in its N-terminal cytoplasmic region, leading to the release and activation of SigI5. This Acetivibrio thermocellus (strain ATCC 27405 / DSM 1237 / JCM 9322 / NBRC 103400 / NCIMB 10682 / NRRL B-4536 / VPI 7372) (Clostridium thermocellum) protein is Anti-sigma-I factor RsgI5.